The sequence spans 57 residues: Lantibiotic nisin-A (57 aa).

A propeptide spanning residues 1 to 23 (MSTKDFNLDLVSVSKKDSGASPR) is cleaved from the precursor. A (Z)-2,3-didehydrobutyrine modification is found at threonine 25. The segment at residues 26–30 (SISLC) is a cross-link (lanthionine (Ser-Cys)). The residue at position 28 (serine 28) is a 2,3-didehydroalanine (Ser). Cross-links (beta-methyllanthionine (Thr-Cys)) lie at residues 31–34 (TPGC), 36–42 (TGALMGC), 46–49 (TATC), and 48–51 (TCHC). Serine 56 carries the 2,3-didehydroalanine (Ser) modification.

It belongs to the type A lantibiotic family. In terms of processing, maturation of lantibiotics involves the enzymatic conversion of Thr, and Ser into dehydrated AA and the formation of thioether bonds with cysteine. This is followed by membrane translocation and cleavage of the modified precursor. The structure of the 2,3-didehydrobutyrine is not discussed in PubMed:8454055. However, in Fig. 1 the residue is diagrammed as the Z-isomer.

In terms of biological role, lanthionine-containing peptide antibiotic (lantibiotic) active on Gram-positive bacteria. The bactericidal activity of lantibiotics is based on depolarization of energized bacterial cytoplasmic membranes, initiated by the formation of aqueous transmembrane pores. In Lactococcus lactis subsp. lactis (Streptococcus lactis), this protein is Lantibiotic nisin-A (spaN).